Here is a 408-residue protein sequence, read N- to C-terminus: Mitochondrial outer membrane protein SLC25A46 (408 aa).

2 disordered regions span residues 1-23 and 52-80; these read MHPR…EEPC and HWGE…LGAG. A compositionally biased stretch (low complexity) spans 66 to 76; that stretch reads LGAAGLNEEPG. A Solcar 1 repeat occupies 86 to 177; the sequence is QLNRFAGFGI…GIISEFTPLP (92 aa). The next 6 helical transmembrane spans lie at 93–113, 157–177, 189–209, 248–268, 304–324, and 373–393; these read FGIG…CIVL, FIVQ…TPLP, IGGH…FYSA, LLPL…HYVI, FPEL…LYPL, and LGFY…VAVL. A Solcar 2 repeat occupies 301–403; that stretch reads DAYFPELIAS…QLTKIIYSTL (103 aa).

It belongs to the mitochondrial carrier (TC 2.A.29) family.

The protein localises to the mitochondrion outer membrane. In terms of biological role, transmembrane protein of the mitochondrial outer membrane that controls mitochondrial organization. May regulate the assembly of the MICOS (mitochondrial contact site and cristae organizing system) complex which is essential to the biogenesis and dynamics of mitochondrial cristae, the inwards folds of the inner mitochondrial membrane. Through its interaction with the EMC (endoplasmic reticulum membrane protein complex), could regulate mitochondrial lipid homeostasis and thereby mitochondrial fission. The polypeptide is Mitochondrial outer membrane protein SLC25A46 (Gallus gallus (Chicken)).